The primary structure comprises 270 residues: Transcription factor bHLH113 (270 aa).

Residues 109-153 form a disordered region; that stretch reads CTVDKSTKSSTKKRTGTGNGQESDQNRKPGKKGKRNQEKSSVGIA. In terms of domain architecture, bHLH spans 144–193; the sequence is NQEKSSVGIAKVRKERLGERIAALQQLVSPYGKTDAASVLHEAMGYIKFL.

As to quaternary structure, homodimer.

The protein resides in the nucleus. This chain is Transcription factor bHLH113 (BHLH113), found in Arabidopsis thaliana (Mouse-ear cress).